Here is a 21-residue protein sequence, read N- to C-terminus: Putative NADH dehydrogenase subunit PS9 (21 aa).

The polypeptide is Putative NADH dehydrogenase subunit PS9 (Pinus strobus (Eastern white pine)).